A 392-amino-acid polypeptide reads, in one-letter code: Cytochrome b (392 aa).

4 helical membrane passes run Phe-38–Met-58, Trp-82–Phe-104, Val-119–Val-139, and Phe-185–Ala-205. 2 residues coordinate heme b: His-88 and His-102. Heme b-binding residues include His-189 and His-203. His-208 lines the a ubiquinone pocket. 4 consecutive transmembrane segments (helical) span residues Phe-231–Phe-251, Ser-295–Lys-315, Ile-327–Cys-347, and Phe-354–Pro-373.

It belongs to the cytochrome b family. In terms of assembly, the main subunits of complex b-c1 are: cytochrome b, cytochrome c1 and the Rieske protein. Requires heme b as cofactor.

It localises to the mitochondrion inner membrane. In terms of biological role, component of the ubiquinol-cytochrome c reductase complex (complex III or cytochrome b-c1 complex) that is part of the mitochondrial respiratory chain. The b-c1 complex mediates electron transfer from ubiquinol to cytochrome c. Contributes to the generation of a proton gradient across the mitochondrial membrane that is then used for ATP synthesis. The polypeptide is Cytochrome b (MT-CYB) (Pisum sativum (Garden pea)).